The sequence spans 713 residues: Cadherin-13 (713 aa).

The N-terminal stretch at 1–22 (MQPRTPLVLCVLLSQVLLLTSA) is a signal peptide. Positions 23 to 138 (EDLDCIPGFQ…RTSPVPRQKR (116 aa)) are excised as a propeptide. N-linked (GlcNAc...) asparagine glycosylation is found at asparagine 52 and asparagine 86. 5 consecutive Cadherin domains span residues 139-245 (SIVV…RPIF), 246-363 (REGP…SPKF), 364-477 (TKKE…GPVF), 478-585 (YPDP…APFI), and 584-690 (FIYP…VDSN). 7 N-linked (GlcNAc...) asparagine glycosylation sites follow: asparagine 382, asparagine 489, asparagine 500, asparagine 530, asparagine 598, asparagine 638, and asparagine 671. A lipid anchor (GPI-anchor amidated asparagine) is attached at asparagine 690. Positions 691 to 713 (AVGALRFSLPSLLLLSLFSLACL) are cleaved as a propeptide — removed in mature form.

As to quaternary structure, by contrast to classical cadherins, homodimerization in trans is not mediated by cadherin EC1 domain strand-swapping, but instead through a homophilic adhesive interface which joins two elongated EC1-EC2 domains through a region near their Ca2+-binding sites to form a tetrahedral, X-like shape.

Its subcellular location is the cell membrane. It localises to the cytoplasm. Its function is as follows. Cadherins are calcium-dependent cell adhesion proteins. They preferentially interact with themselves in a homophilic manner in connecting cells; cadherins may thus contribute to the sorting of heterogeneous cell types. May act as a negative regulator of neural cell growth. The sequence is that of Cadherin-13 (CDH13) from Pongo abelii (Sumatran orangutan).